Consider the following 354-residue polypeptide: Uroporphyrinogen decarboxylase (354 aa).

Residues 27–31 (RQAGR), Asp77, Tyr154, Thr209, and His327 each bind substrate.

Belongs to the uroporphyrinogen decarboxylase family. Homodimer.

The protein resides in the cytoplasm. It catalyses the reaction uroporphyrinogen III + 4 H(+) = coproporphyrinogen III + 4 CO2. Its pathway is porphyrin-containing compound metabolism; protoporphyrin-IX biosynthesis; coproporphyrinogen-III from 5-aminolevulinate: step 4/4. In terms of biological role, catalyzes the decarboxylation of four acetate groups of uroporphyrinogen-III to yield coproporphyrinogen-III. The polypeptide is Uroporphyrinogen decarboxylase (Escherichia coli O17:K52:H18 (strain UMN026 / ExPEC)).